The chain runs to 437 residues: Type II methylase M.HgiEI (437 aa).

An SAM-dependent MTase C5-type domain is found at 4–431 (FRFIDLFAGI…KRLQCVKLFE (428 aa)). Residue Cys75 is part of the active site.

This sequence belongs to the class I-like SAM-binding methyltransferase superfamily. C5-methyltransferase family.

It carries out the reaction a 2'-deoxycytidine in DNA + S-adenosyl-L-methionine = a 5-methyl-2'-deoxycytidine in DNA + S-adenosyl-L-homocysteine + H(+). Its function is as follows. A methylase that recognizes the double-stranded sequence 5'-GGWCC-3', methylates C-? on both strands, and protects the DNA from cleavage by the HgiEI endonuclease. This system is more active than isoschizomeric RM.HgiBI. The protein is Type II methylase M.HgiEI of Herpetosiphon aurantiacus (Herpetosiphon giganteus).